The primary structure comprises 1502 residues: Heme-responsive zinc finger transcription factor HAP1 (1502 aa).

Over residues 1–50 (MSNTPYNSSVPSIASMTQSSVSRSPNMHTATTPGANTSSNSPPLHMSSDS) the composition is skewed to polar residues. A disordered region spans residues 1 to 56 (MSNTPYNSSVPSIASMTQSSVSRSPNMHTATTPGANTSSNSPPLHMSSDSSKIKRK). Zn(2+)-binding residues include cysteine 64, cysteine 67, cysteine 74, cysteine 81, cysteine 84, and cysteine 93. The segment at residues 64 to 93 (CTICRKRKVKCDKLRPHCQQCTKTGVAHLC) is a DNA-binding region (zn(2)-C6 fungal-type). Residues 105-134 (EKELLKDNELKKLRERVKSLEKTLSKVHSS) adopt a coiled-coil conformation. Positions 126-208 (KTLSKVHSSP…ANSSSLSISN (83 aa)) are disordered. Residues 130-142 (KVHSSPSSNSLKS) are compositionally biased toward low complexity. 2 stretches are compositionally biased toward polar residues: residues 143-152 (YNTPESSNLF) and 160-176 (TLVN…SHMH). The span at 177 to 208 (QQQQQQQQQEQQQDFSRSANANANSSSLSISN) shows a compositional bias: low complexity. The interval 244 to 444 (KGDPYLKLLW…NTIPHHQPQS (201 aa)) is heme-responsive; required for HMC formation. HRM repeat units follow at residues 280–285 (KCPINH), 299–304 (KCPVDH), 323–328 (KCPVDH), 347–352 (RCPVDH), 389–394 (KCPVDH), and 415–420 (RCPIDH). 2 stretches are compositionally biased toward polar residues: residues 432–447 (STHN…SGSH) and 706–734 (QLNA…NPTL). Disordered regions lie at residues 432 to 458 (STHN…SRKH) and 706 to 767 (QLNA…KENQ). Over residues 735–759 (NNNMSAATTNSSSRSGSADSRSGSN) the composition is skewed to low complexity. The stretch at 1192–1197 (KCPVYQ) is one HRM 7 repeat. A disordered region spans residues 1384–1411 (TANTDTSANGSALSTLTSPQGSDLASNS). Residues 1388-1411 (DTSANGSALSTLTSPQGSDLASNS) show a composition bias toward polar residues.

In terms of assembly, binds DNA as a homodimer. Interacts with SRO9 and YDJ1. In the absence of heme, binds to at least four cellular proteins, including YDJ1 and SRO9, forming a high-molecular-weight complex (HMC) which results in repression of its activity and dictates its DNA-binding specificity.

It is found in the nucleus. In terms of biological role, regulation of oxygen dependent gene expression. It modulates the expression of Iso-1 (CYP1) and Iso-2 (CYP3) cytochrome c. In response to heme, promotes transcription of genes encoding functions required for respiration, controlling oxidative damage and repression of anaerobic genes. Binds to the sequence 5'-CGGNNNTNNCGG-3'. Is non-functional in terms of iso-1 cytochrome c expression in strain S288c and its derivatives. This chain is Heme-responsive zinc finger transcription factor HAP1 (HAP1), found in Saccharomyces cerevisiae (strain ATCC 204508 / S288c) (Baker's yeast).